Consider the following 69-residue polypeptide: Cytochrome c oxidase subunit 8A, mitochondrial (69 aa).

Residues 1-25 constitute a mitochondrion transit peptide; sequence MSVLTPLLLRGLTGSARRLPVPRAK. The SIFI-degron motif lies at 2–19; the sequence is SVLTPLLLRGLTGSARRL. Residues 26 to 36 are Mitochondrial matrix-facing; it reads IHSLPPEGKLG. Residues 37–60 traverse the membrane as a helical segment; sequence IMELAVGLTSCFVTFLLPAGWILS. At 61 to 69 the chain is on the mitochondrial intermembrane side; the sequence is HLETYRRPE.

The protein belongs to the cytochrome c oxidase VIII family. As to quaternary structure, component of the cytochrome c oxidase (complex IV, CIV), a multisubunit enzyme composed of 14 subunits. The complex is composed of a catalytic core of 3 subunits MT-CO1, MT-CO2 and MT-CO3, encoded in the mitochondrial DNA, and 11 supernumerary subunits COX4I1 (or COX4I2), COX5A, COX5B, COX6A1 (or COX6A2), COX6B1 (or COX6B2), COX6C, COX7A2 (or COX7A1), COX7B, COX7C, COX8A and NDUFA4, which are encoded in the nuclear genome. The complex exists as a monomer or a dimer and forms supercomplexes (SCs) in the inner mitochondrial membrane with NADH-ubiquinone oxidoreductase (complex I, CI) and ubiquinol-cytochrome c oxidoreductase (cytochrome b-c1 complex, complex III, CIII), resulting in different assemblies (supercomplex SCI(1)III(2)IV(1) and megacomplex MCI(2)III(2)IV(2)). In terms of processing, in response to mitochondrial stress, the precursor protein is ubiquitinated by the SIFI complex in the cytoplasm before mitochondrial import, leading to its degradation. Within the SIFI complex, UBR4 initiates ubiquitin chain that are further elongated or branched by KCMF1. Widely expressed.

The protein resides in the mitochondrion inner membrane. It participates in energy metabolism; oxidative phosphorylation. Functionally, component of the cytochrome c oxidase, the last enzyme in the mitochondrial electron transport chain which drives oxidative phosphorylation. The respiratory chain contains 3 multisubunit complexes succinate dehydrogenase (complex II, CII), ubiquinol-cytochrome c oxidoreductase (cytochrome b-c1 complex, complex III, CIII) and cytochrome c oxidase (complex IV, CIV), that cooperate to transfer electrons derived from NADH and succinate to molecular oxygen, creating an electrochemical gradient over the inner membrane that drives transmembrane transport and the ATP synthase. Cytochrome c oxidase is the component of the respiratory chain that catalyzes the reduction of oxygen to water. Electrons originating from reduced cytochrome c in the intermembrane space (IMS) are transferred via the dinuclear copper A center (CU(A)) of subunit 2 and heme A of subunit 1 to the active site in subunit 1, a binuclear center (BNC) formed by heme A3 and copper B (CU(B)). The BNC reduces molecular oxygen to 2 water molecules using 4 electrons from cytochrome c in the IMS and 4 protons from the mitochondrial matrix. This is Cytochrome c oxidase subunit 8A, mitochondrial (COX8A) from Homo sapiens (Human).